A 370-amino-acid chain; its full sequence is Quinolinate synthase (370 aa).

Iminosuccinate is bound by residues H62 and S83. C128 contributes to the [4Fe-4S] cluster binding site. Iminosuccinate is bound by residues 154–156 (YAN) and S171. Residue C215 participates in [4Fe-4S] cluster binding. Residues 241-243 (HPE) and T258 contribute to the iminosuccinate site. C312 contributes to the [4Fe-4S] cluster binding site.

The protein belongs to the quinolinate synthase family. Type 1 subfamily. [4Fe-4S] cluster serves as cofactor.

It is found in the cytoplasm. It carries out the reaction iminosuccinate + dihydroxyacetone phosphate = quinolinate + phosphate + 2 H2O + H(+). The protein operates within cofactor biosynthesis; NAD(+) biosynthesis; quinolinate from iminoaspartate: step 1/1. Catalyzes the condensation of iminoaspartate with dihydroxyacetone phosphate to form quinolinate. This chain is Quinolinate synthase, found in Neisseria meningitidis serogroup C (strain 053442).